We begin with the raw amino-acid sequence, 116 residues long: Protein Rev (116 aa).

A phosphoserine; by host CK2 mark is found at S5 and S8. Residues 18-26 (IIKILYQSN) are homomultimerization. A disordered region spans residues 24–49 (QSNPHPSPEGTRQARRNRRRRWRERQ). Positions 34 to 50 (TRQARRNRRRRWRERQR) match the Nuclear localization signal and RNA-binding (RRE) motif. Residues 36-47 (QARRNRRRRWRE) show a composition bias toward basic residues. Positions 73–84 (LQLPPLDRLTLD) match the Nuclear export signal and binding to XPO1 motif. Residues S92 and S99 each carry the phosphoserine; by host modification.

This sequence belongs to the HIV-1 REV protein family. As to quaternary structure, homomultimer; when bound to the RRE. Multimeric assembly is essential for activity and may involve XPO1. Binds to human KPNB1, XPO1, TNPO1, RANBP5 and IPO7. Interacts with the viral Integrase. Interacts with human KHDRBS1. Interacts with human NAP1; this interaction decreases Rev multimerization and stimulates its activity. Interacts with human DEAD-box helicases DDX3 and DDX24; these interactions may serve for viral RNA export to the cytoplasm and packaging, respectively. Interacts with human PSIP1; this interaction may inhibit HIV-1 DNA integration by promoting dissociation of the Integrase-LEDGF/p75 complex. Asymmetrically arginine dimethylated at one site by host PRMT6. Methylation impairs the RNA-binding activity and export of viral RNA from the nucleus to the cytoplasm. Post-translationally, phosphorylated by protein kinase CK2. Presence of, and maybe binding to the N-terminus of the regulatory beta subunit of CK2 is necessary for CK2-mediated Rev's phosphorylation.

The protein resides in the host nucleus. It localises to the host nucleolus. Its subcellular location is the host cytoplasm. In terms of biological role, escorts unspliced or incompletely spliced viral pre-mRNAs (late transcripts) out of the nucleus of infected cells. These pre-mRNAs carry a recognition sequence called Rev responsive element (RRE) located in the env gene, that is not present in fully spliced viral mRNAs (early transcripts). This function is essential since most viral proteins are translated from unspliced or partially spliced pre-mRNAs which cannot exit the nucleus by the pathway used by fully processed cellular mRNAs. Rev itself is translated from a fully spliced mRNA that readily exits the nucleus. Rev's nuclear localization signal (NLS) binds directly to KPNB1/Importin beta-1 without previous binding to KPNA1/Importin alpha-1. KPNB1 binds to the GDP bound form of RAN (Ran-GDP) and targets Rev to the nucleus. In the nucleus, the conversion from Ran-GDP to Ran-GTP dissociates Rev from KPNB1 and allows Rev's binding to the RRE in viral pre-mRNAs. Rev multimerization on the RRE via cooperative assembly exposes its nuclear export signal (NES) to the surface. Rev can then form a complex with XPO1/CRM1 and Ran-GTP, leading to nuclear export of the complex. Conversion from Ran-GTP to Ran-GDP mediates dissociation of the Rev/RRE/XPO1/RAN complex, so that Rev can return to the nucleus for a subsequent round of export. Beside KPNB1, also seems to interact with TNPO1/Transportin-1, RANBP5/IPO5 and IPO7/RANBP7 for nuclear import. The nucleoporin-like HRB/RIP is an essential cofactor that probably indirectly interacts with Rev to release HIV RNAs from the perinuclear region to the cytoplasm. The protein is Protein Rev of Human immunodeficiency virus type 1 group M subtype B (isolate SF33) (HIV-1).